A 179-amino-acid polypeptide reads, in one-letter code: Peptidyl-tRNA hydrolase (179 aa).

Tyrosine 15 lines the tRNA pocket. The active-site Proton acceptor is histidine 20. 3 residues coordinate tRNA: tyrosine 66, asparagine 68, and asparagine 114.

It belongs to the PTH family. In terms of assembly, monomer.

It is found in the cytoplasm. The enzyme catalyses an N-acyl-L-alpha-aminoacyl-tRNA + H2O = an N-acyl-L-amino acid + a tRNA + H(+). Functionally, hydrolyzes ribosome-free peptidyl-tRNAs (with 1 or more amino acids incorporated), which drop off the ribosome during protein synthesis, or as a result of ribosome stalling. Its function is as follows. Catalyzes the release of premature peptidyl moieties from peptidyl-tRNA molecules trapped in stalled 50S ribosomal subunits, and thus maintains levels of free tRNAs and 50S ribosomes. The polypeptide is Peptidyl-tRNA hydrolase (Chlamydia trachomatis serovar L2b (strain UCH-1/proctitis)).